We begin with the raw amino-acid sequence, 677 residues long: MNFELTSAYKPTGDQPEAIAQLTEGVLEGVPAQTLLGVTGSGKTFTIANVIANINKPTLILSHNKTLAAQLYSEFKGFFPNNAVEYYVSYYDYYQPEAYLPSSDTYIEKDLAINDEIDKLRLAATSALLSGRKDVVVVSSVSCIYGMGNPSDFYNNVIEIERGRTINRNVFLRRLVDSLYMRNDIELNRGNFRVKGDTVDIYLAYSDNLLRVTFWGDEIDGIEEVDPVSGVTIAPFEAYKIYPANLFMTTKEATLRAIHEIEDDLTKQVAYFESIGKEYEAKRLYERVTYDMEMIRELGHCSGIENYSRYFDGRAAGTRPYCLLDFFPDDFLIVIDESHVSVPQIRAMYGGDRARKINLVEYGFRLPAAMDNRPLKFEEFESMAKQVIYVSATPADYELVQSEGIVVEQVIRPTGLLDPVIEVRPSLNQIDDLMEEIQIRIEKEERILVTTLTKRMAEELTEYLLNNNVRCNYIHSDVDTLERVKIMDDLRQGVYDVLIGVNLLREGLDLPEVSLVAILDADKEGFLRSHRSLTQTAGRAARNVNGMVIMYADKITDSMRLTIDETNRRREKQLAYNEEHGITPQQIKKARNLSVFGNGAETEDTQKGTRAYVEPSSPNIAADPVVQYMSKTQLEKSMERTRKLMQEAAKKLEFIEAAQYRDELLKMEDLMKEKWPG.

Residues 24–412 enclose the Helicase ATP-binding domain; it reads EGVLEGVPAQ…EGIVVEQVIR (389 aa). Position 37–44 (37–44) interacts with ATP; the sequence is GVTGSGKT. Positions 90 to 113 match the Beta-hairpin motif; sequence YYDYYQPEAYLPSSDTYIEKDLAI. The 163-residue stretch at 429–591 folds into the Helicase C-terminal domain; it reads QIDDLMEEIQ…ITPQQIKKAR (163 aa). Positions 635–670 constitute a UVR domain; that stretch reads EKSMERTRKLMQEAAKKLEFIEAAQYRDELLKMEDL.

The protein belongs to the UvrB family. Forms a heterotetramer with UvrA during the search for lesions. Interacts with UvrC in an incision complex.

It is found in the cytoplasm. Functionally, the UvrABC repair system catalyzes the recognition and processing of DNA lesions. A damage recognition complex composed of 2 UvrA and 2 UvrB subunits scans DNA for abnormalities. Upon binding of the UvrA(2)B(2) complex to a putative damaged site, the DNA wraps around one UvrB monomer. DNA wrap is dependent on ATP binding by UvrB and probably causes local melting of the DNA helix, facilitating insertion of UvrB beta-hairpin between the DNA strands. Then UvrB probes one DNA strand for the presence of a lesion. If a lesion is found the UvrA subunits dissociate and the UvrB-DNA preincision complex is formed. This complex is subsequently bound by UvrC and the second UvrB is released. If no lesion is found, the DNA wraps around the other UvrB subunit that will check the other stand for damage. The protein is UvrABC system protein B of Bacteroides fragilis (strain YCH46).